Here is a 597-residue protein sequence, read N- to C-terminus: MERKYNVAVVGAGHAGCEASLACARMGLKTLIITLNADSMARMPCNPAVGGIAKGQMVREIDAMGGEIGRITDRAVLQFKMLNSSRGPAVWSPRAQCDKELYSVLMSKSVQNQQNLEILQSEATSLTVKNGKVCGVKILTGETIEADAVVITTGTFLKGTIHLGKMHFNGGRFNEVSALYLSKSLIEDCGLKLGRFKTTTTPRINSRSIDYSKMTEQFGDEKPVPFSYSTKVEEWRKNLKQLSCWLTYTNPITHKIVSDNLGLSSIYIGEVNSKSPRYCPSIEEKIERYPEKTSHHVFVEPEGYNTNEVYLNGLYTGLPFNLQQQMINSIVGLENAKVIRYGYAIEYDYSSPLQIKKTLETKTVKNLFLGGQINGTTGYEEAAAQGFVAGVNAGLKVLGKTPFILERNESYIGILVDDITTKGMDEPYRMFTSRAEYRLSIRNDNADLRLMDAGHSIGLISDKAYKKFELYRKAFTDICENNAENLPDDEDLSPWSIEKAKEEVYIHKKYEGYIEIQNKMINKMKKSKDRKIPEDFDYNKLKSLSAETKQRLFEVRPQTIGQASRICAIKPSDIAILTVYLEKQKKERKQKKHNKIK.

11–16 (GAGHAG) is an FAD binding site. 275-289 (SPRYCPSIEEKIERY) lines the NAD(+) pocket.

This sequence belongs to the MnmG family. In terms of assembly, homodimer. Heterotetramer of two MnmE and two MnmG subunits. FAD is required as a cofactor.

The protein resides in the cytoplasm. In terms of biological role, NAD-binding protein involved in the addition of a carboxymethylaminomethyl (cmnm) group at the wobble position (U34) of certain tRNAs, forming tRNA-cmnm(5)s(2)U34. The chain is tRNA uridine 5-carboxymethylaminomethyl modification enzyme MnmG from Endomicrobium trichonymphae.